A 91-amino-acid polypeptide reads, in one-letter code: Small ribosomal subunit protein uS15 (91 aa).

The protein belongs to the universal ribosomal protein uS15 family. In terms of assembly, part of the 30S ribosomal subunit. Forms a bridge to the 50S subunit in the 70S ribosome, contacting the 23S rRNA.

Its function is as follows. One of the primary rRNA binding proteins, it binds directly to 16S rRNA where it helps nucleate assembly of the platform of the 30S subunit by binding and bridging several RNA helices of the 16S rRNA. Forms an intersubunit bridge (bridge B4) with the 23S rRNA of the 50S subunit in the ribosome. The protein is Small ribosomal subunit protein uS15 of Legionella pneumophila (strain Paris).